The primary structure comprises 399 residues: Elongation factor Tu (399 aa).

A tr-type G domain is found at 10–204 (KPHVNIGTIG…SVDESIPEPE (195 aa)). A G1 region spans residues 19 to 26 (GHVDHGKT). 19–26 (GHVDHGKT) contacts GTP. Thr-26 contributes to the Mg(2+) binding site. Positions 60–64 (GITIN) are G2. The segment at 81–84 (DCPG) is G3. Residues 81–85 (DCPGH) and 136–139 (NKCD) each bind GTP. The interval 136 to 139 (NKCD) is G4. A G5 region spans residues 174-176 (SAL).

This sequence belongs to the TRAFAC class translation factor GTPase superfamily. Classic translation factor GTPase family. EF-Tu/EF-1A subfamily. Monomer.

The protein resides in the cytoplasm. It catalyses the reaction GTP + H2O = GDP + phosphate + H(+). GTP hydrolase that promotes the GTP-dependent binding of aminoacyl-tRNA to the A-site of ribosomes during protein biosynthesis. The protein is Elongation factor Tu of Prochlorococcus marinus (strain MIT 9211).